A 172-amino-acid polypeptide reads, in one-letter code: Small ribosomal subunit protein uS5 (172 aa).

In terms of domain architecture, S5 DRBM spans 15–78 (LNDKLIFINR…ANAKRNLSRI (64 aa)).

Belongs to the universal ribosomal protein uS5 family. As to quaternary structure, part of the 30S ribosomal subunit. Contacts proteins S4 and S8.

Its function is as follows. With S4 and S12 plays an important role in translational accuracy. In terms of biological role, located at the back of the 30S subunit body where it stabilizes the conformation of the head with respect to the body. The sequence is that of Small ribosomal subunit protein uS5 from Dehalococcoides mccartyi (strain ATCC BAA-2266 / KCTC 15142 / 195) (Dehalococcoides ethenogenes (strain 195)).